The sequence spans 519 residues: Cobyric acid synthase (519 aa).

The GATase cobBQ-type domain maps to 256–438 (WLRVAVPRLP…WHGLFENDAF (183 aa)). Cys337 serves as the catalytic Nucleophile. The active site involves His430.

Belongs to the CobB/CobQ family. CobQ subfamily.

It functions in the pathway cofactor biosynthesis; adenosylcobalamin biosynthesis. Its function is as follows. Catalyzes amidations at positions B, D, E, and G on adenosylcobyrinic A,C-diamide. NH(2) groups are provided by glutamine, and one molecule of ATP is hydrogenolyzed for each amidation. This Saccharopolyspora erythraea (strain ATCC 11635 / DSM 40517 / JCM 4748 / NBRC 13426 / NCIMB 8594 / NRRL 2338) protein is Cobyric acid synthase.